Consider the following 540-residue polypeptide: MRVNKSLTPQDLMAYGINDVQDIVYNPSYDLLFQEELDPNLKGYERGVLTNLGAVAVDTGVFTGRSPKDKYIVRDDTTRDTFWWADKGKGKNDNKPLSPETWQHLKGLVTNQLSGKRLFVVDAFCGANADTRLSVRFITEVAWQAHFVKNMFIRPTDEELVDFEPDFIVMNGAKCTNPQWKEQGLNSENFVAFNLTERMQLIGGTWYGGEMKKGMFSMMNYLLPLKGIASMHCSANVGEKGDVAVFFGLSGTGKTTLSTDPKRRLIGDDEHGWDDDGVFNFEGGCYAKTIKLSKEAEPEIYNAIRRDALLENVTVREDGTIDFDDGSKTENTRVSYPIYHIDNIVKPVSKAGHATKVIFLTADAFGVLPPVSRLTADQTQYHFLSGFTAKLAGTERGITEPTPTFSACFGAAFLSLHPTQYAEVLVKRMQAAGAQAYLVNTGWNGTGKRISIKDTRAIIDAILNGSLDNAETFTLPMFNLAIPTELPGVDTKILDPRNTYASSEQWQEKAETLAKLFIDNFDKYTDTPAGAALVEAGPKL.

Arginine 65 contacts substrate. Lysine 87 carries the N6-acetyllysine modification. Residues tyrosine 207 and lysine 213 each coordinate substrate. Residues lysine 213, histidine 232, and glycine 248–threonine 256 each bind ATP. Positions 213 and 232 each coordinate Mn(2+). Aspartate 269 provides a ligand contact to Mn(2+). Residues glutamate 297, arginine 333, arginine 449–isoleucine 450, and threonine 455 contribute to the ATP site. Arginine 333 is a binding site for substrate. Lysine 523 bears the N6-acetyllysine mark.

Belongs to the phosphoenolpyruvate carboxykinase (ATP) family. As to quaternary structure, monomer. It depends on Mn(2+) as a cofactor.

The protein resides in the cytoplasm. It catalyses the reaction oxaloacetate + ATP = phosphoenolpyruvate + ADP + CO2. Its pathway is carbohydrate biosynthesis; gluconeogenesis. Its function is as follows. Involved in the gluconeogenesis. Catalyzes the conversion of oxaloacetate (OAA) to phosphoenolpyruvate (PEP) through direct phosphoryl transfer between the nucleoside triphosphate and OAA. The chain is Phosphoenolpyruvate carboxykinase (ATP) from Escherichia fergusonii (strain ATCC 35469 / DSM 13698 / CCUG 18766 / IAM 14443 / JCM 21226 / LMG 7866 / NBRC 102419 / NCTC 12128 / CDC 0568-73).